A 918-amino-acid polypeptide reads, in one-letter code: Aconitase-ribosomal protein bL21m fusion protein (918 aa).

The N-terminal 30 residues, 1–30 (MATFARMKLCLSGSSQAIPSKGISLVAARF), are a transit peptide targeting the mitochondrion. The homocitrate dehydratase, mitochondrial stretch occupies residues 31 to 811 (QSTASRASYV…IDSIKQQPDH (781 aa)). Residues Gln-105 and 198 to 200 (DSH) contribute to the substrate site. Residues Cys-394, Cys-457, and Cys-460 each coordinate [4Fe-4S] cluster. Substrate contacts are provided by residues Arg-484, Arg-489, Lys-619, and 680–681 (AR). The interval 812–918 (YADAYIFNRH…ILRVTELKLN (107 aa)) is large ribosomal subunit protein bL21m.

In the N-terminal section; belongs to the aconitase/IPM isomerase family. It in the C-terminal section; belongs to the bacterial ribosomal protein bL21 family. In terms of assembly, component of the mitochondrial large ribosomal subunit (mt-LSU). Mature yeast 74S mitochondrial ribosomes consist of a small (37S) and a large (54S) subunit. The 37S small subunit contains a 15S ribosomal RNA (15S mt-rRNA) and at least 32 different proteins. The 54S large subunit contains a 21S rRNA (21S mt-rRNA) and at least 45 different proteins. [4Fe-4S] cluster serves as cofactor.

Its subcellular location is the mitochondrion. The protein resides in the nucleus. The catalysed reaction is (2R)-homocitrate = cis-homoaconitate + H2O. Its pathway is amino-acid biosynthesis; L-lysine biosynthesis via AAA pathway; L-alpha-aminoadipate from 2-oxoglutarate: step 2/5. In terms of biological role, catalyzes the reversible dehydration of (R)-homocitrate to cis-homoaconitate, a step in the alpha-aminoadipate pathway for lysine biosynthesis. Its function is as follows. Component of the mitochondrial ribosome (mitoribosome), a dedicated translation machinery responsible for the synthesis of mitochondrial genome-encoded proteins, including at least some of the essential transmembrane subunits of the mitochondrial respiratory chain. The mitoribosomes are attached to the mitochondrial inner membrane and translation products are cotranslationally integrated into the membrane. The protein is Aconitase-ribosomal protein bL21m fusion protein (aco2) of Schizosaccharomyces pombe (strain 972 / ATCC 24843) (Fission yeast).